The chain runs to 200 residues: MTVVIGLTGGIASGKSTVSQMFRELSIPVIDADIIAREVVEKGKPAYNKIVEVFGTEVLQEDGELDRPKLGSVVFHNEEKRLQLNKIVHPAVHEEMNRQKEMYIKEGMQAVVLDIPLLFESKLTSLVDRVLVVAVKPHTQLERLMKRNNFSEEEATARIQSQMSLEEKVKNADEVINNDGTIMGTKTQLQAILKKWNIID.

Residues 4 to 200 form the DPCK domain; sequence VIGLTGGIAS…AILKKWNIID (197 aa). 12–17 contacts ATP; that stretch reads ASGKST.

Belongs to the CoaE family.

It localises to the cytoplasm. The catalysed reaction is 3'-dephospho-CoA + ATP = ADP + CoA + H(+). Its pathway is cofactor biosynthesis; coenzyme A biosynthesis; CoA from (R)-pantothenate: step 5/5. Catalyzes the phosphorylation of the 3'-hydroxyl group of dephosphocoenzyme A to form coenzyme A. This chain is Dephospho-CoA kinase, found in Bacillus cereus (strain ZK / E33L).